Here is a 169-residue protein sequence, read N- to C-terminus: NADH-quinone oxidoreductase subunit B (169 aa).

[4Fe-4S] cluster is bound by residues cysteine 42, cysteine 43, cysteine 107, and cysteine 136.

Belongs to the complex I 20 kDa subunit family. NDH-1 is composed of 14 different subunits. Subunits NuoB, C, D, E, F, and G constitute the peripheral sector of the complex. [4Fe-4S] cluster serves as cofactor.

The protein resides in the cell inner membrane. It catalyses the reaction a quinone + NADH + 5 H(+)(in) = a quinol + NAD(+) + 4 H(+)(out). NDH-1 shuttles electrons from NADH, via FMN and iron-sulfur (Fe-S) centers, to quinones in the respiratory chain. The immediate electron acceptor for the enzyme in this species is believed to be ubiquinone. Couples the redox reaction to proton translocation (for every two electrons transferred, four hydrogen ions are translocated across the cytoplasmic membrane), and thus conserves the redox energy in a proton gradient. The chain is NADH-quinone oxidoreductase subunit B from Helicobacter hepaticus (strain ATCC 51449 / 3B1).